The sequence spans 424 residues: Na(+)/H(+) antiporter NhaA (424 aa).

The next 11 membrane-spanning stretches (helical) occupy residues 23–43 (ILLI…LATL), 65–85 (VHLW…GLEI), 102–122 (LPFI…MFFV), 131–151 (GWAI…ALLG), 160–180 (LFLV…IALF), 183–203 (AKIN…MFAC), 211–231 (LLVY…SGVH), 265–285 (ALHP…NAGV), 303–323 (IAAG…WLAV), 341–361 (AVSM…SLAF), and 373–393 (IGIL…LRLA).

Belongs to the NhaA Na(+)/H(+) (TC 2.A.33) antiporter family.

Its subcellular location is the cell inner membrane. It carries out the reaction Na(+)(in) + 2 H(+)(out) = Na(+)(out) + 2 H(+)(in). Functionally, na(+)/H(+) antiporter that extrudes sodium in exchange for external protons. The sequence is that of Na(+)/H(+) antiporter NhaA from Sphingopyxis alaskensis (strain DSM 13593 / LMG 18877 / RB2256) (Sphingomonas alaskensis).